A 334-amino-acid polypeptide reads, in one-letter code: Porphobilinogen deaminase (334 aa).

Cys-258 is subject to S-(dipyrrolylmethanemethyl)cysteine.

It belongs to the HMBS family. Monomer. Dipyrromethane serves as cofactor.

The catalysed reaction is 4 porphobilinogen + H2O = hydroxymethylbilane + 4 NH4(+). It participates in porphyrin-containing compound metabolism; protoporphyrin-IX biosynthesis; coproporphyrinogen-III from 5-aminolevulinate: step 2/4. Functionally, tetrapolymerization of the monopyrrole PBG into the hydroxymethylbilane pre-uroporphyrinogen in several discrete steps. The sequence is that of Porphobilinogen deaminase from Ralstonia nicotianae (strain ATCC BAA-1114 / GMI1000) (Ralstonia solanacearum).